A 33-amino-acid chain; its full sequence is Photosystem II reaction center protein Psb30 (33 aa).

Residues 5-25 (LIVQLGSLTLITLAGPLVVVL) form a helical membrane-spanning segment.

It belongs to the Psb30/Ycf12 family. In terms of assembly, PSII is composed of 1 copy each of membrane proteins PsbA, PsbB, PsbC, PsbD, PsbE, PsbF, PsbH, PsbI, PsbJ, PsbK, PsbL, PsbM, PsbT, PsbY, PsbZ, Psb30/Ycf12, peripheral proteins of the oxygen-evolving complex and a large number of cofactors. It forms dimeric complexes.

The protein resides in the plastid. It localises to the chloroplast thylakoid membrane. Its function is as follows. A core subunit of photosystem II (PSII), probably helps stabilize the reaction center. This chain is Photosystem II reaction center protein Psb30, found in Euglena deses.